A 266-amino-acid chain; its full sequence is Putative pyruvate, phosphate dikinase regulatory protein (266 aa).

ADP is bound at residue 149–156 (GVSRTSKT).

The protein belongs to the pyruvate, phosphate/water dikinase regulatory protein family. PDRP subfamily.

It carries out the reaction N(tele)-phospho-L-histidyl/L-threonyl-[pyruvate, phosphate dikinase] + ADP = N(tele)-phospho-L-histidyl/O-phospho-L-threonyl-[pyruvate, phosphate dikinase] + AMP + H(+). The enzyme catalyses N(tele)-phospho-L-histidyl/O-phospho-L-threonyl-[pyruvate, phosphate dikinase] + phosphate + H(+) = N(tele)-phospho-L-histidyl/L-threonyl-[pyruvate, phosphate dikinase] + diphosphate. In terms of biological role, bifunctional serine/threonine kinase and phosphorylase involved in the regulation of the pyruvate, phosphate dikinase (PPDK) by catalyzing its phosphorylation/dephosphorylation. This is Putative pyruvate, phosphate dikinase regulatory protein from Halothermothrix orenii (strain H 168 / OCM 544 / DSM 9562).